The chain runs to 323 residues: Beta-ketoacyl-[acyl-carrier-protein] synthase III (323 aa).

Active-site residues include Cys-113 and His-250. The segment at 251-255 (QANKR) is ACP-binding. Asn-280 is an active-site residue.

Belongs to the thiolase-like superfamily. FabH family. In terms of assembly, homodimer.

The protein localises to the cytoplasm. The enzyme catalyses malonyl-[ACP] + acetyl-CoA + H(+) = 3-oxobutanoyl-[ACP] + CO2 + CoA. It functions in the pathway lipid metabolism; fatty acid biosynthesis. Catalyzes the condensation reaction of fatty acid synthesis by the addition to an acyl acceptor of two carbons from malonyl-ACP. Catalyzes the first condensation reaction which initiates fatty acid synthesis and may therefore play a role in governing the total rate of fatty acid production. Possesses both acetoacetyl-ACP synthase and acetyl transacylase activities. Its substrate specificity determines the biosynthesis of branched-chain and/or straight-chain of fatty acids. The sequence is that of Beta-ketoacyl-[acyl-carrier-protein] synthase III from Brucella canis (strain ATCC 23365 / NCTC 10854 / RM-666).